Here is a 527-residue protein sequence, read N- to C-terminus: MNVIFSLASFVKNMYNASLNQRNLISLPFNFMLNFAPVFIWLSIFKRAGLIPIRLRPDIHSKFAFFADQFLFGDYWHELTVQLPDNTSKLFFWSFISSSAFLLVFLICIPFAIWYYIYYIKHVNYNLLEWFANIFHYPCKRKQRPIQKRFRTIFIPFALPLFTFVILNIDHFFAYQSDANFTKTKDLLAWFSYVILHLTAPILTAVYLYVFQPPGTLKCFSFALGLQNIAGVLTHLLVPMASPWFTHLYGIDDTEHVNYTQEGFAAGLIRVDSHLGTHLNTKGFHMSPIVFGAVPSLHSAIAFQCFLFLVSRSTSLKHRFSNAGGFTMHNNDSSTFKLSEEDSEDEGDNSIPPTIGPNDLEMEPLGTVEPVDISNERSSSPSSSFTVSSNERSTGGGDGSIINSNGNKKPLQFVHLYDEDTNFTNKWIFKIVNDGFIPKFWAILYIILQWWATMYLDHHYRFDLFVGVLYAMTSFIIINWFVLQPKVLKKWIHIRLGDKVDTRNEARTFGMRVFCGTKMEWFFDPLA.

The Cytoplasmic portion of the chain corresponds to 1 to 24 (MNVIFSLASFVKNMYNASLNQRNL). The chain crosses the membrane as a helical span at residues 25–45 (ISLPFNFMLNFAPVFIWLSIF). Topologically, residues 46 to 99 (KRAGLIPIRLRPDIHSKFAFFADQFLFGDYWHELTVQLPDNTSKLFFWSFISSS) are lumenal. Residues 100–120 (AFLLVFLICIPFAIWYYIYYI) form a helical membrane-spanning segment. Residues 121–152 (KHVNYNLLEWFANIFHYPCKRKQRPIQKRFRT) are Cytoplasmic-facing. The helical transmembrane segment at 153 to 173 (IFIPFALPLFTFVILNIDHFF) threads the bilayer. Residues 174-190 (AYQSDANFTKTKDLLAW) lie on the Lumenal side of the membrane. The chain crosses the membrane as a helical span at residues 191-211 (FSYVILHLTAPILTAVYLYVF). Over 212-219 (QPPGTLKC) the chain is Cytoplasmic. The helical transmembrane segment at 220–240 (FSFALGLQNIAGVLTHLLVPM) threads the bilayer. The Lumenal segment spans residues 241–288 (ASPWFTHLYGIDDTEHVNYTQEGFAAGLIRVDSHLGTHLNTKGFHMSP). The chain crosses the membrane as a helical span at residues 289-309 (IVFGAVPSLHSAIAFQCFLFL). Residues 310 to 435 (VSRSTSLKHR…KWIFKIVNDG (126 aa)) are Cytoplasmic-facing. Residues 331–404 (NDSSTFKLSE…GGGDGSIINS (74 aa)) form a disordered region. Positions 376–389 (ERSSSPSSSFTVSS) are enriched in low complexity. A helical membrane pass occupies residues 436–456 (FIPKFWAILYIILQWWATMYL). The Lumenal portion of the chain corresponds to 457–461 (DHHYR). A helical membrane pass occupies residues 462–482 (FDLFVGVLYAMTSFIIINWFV). Topologically, residues 483-527 (LQPKVLKKWIHIRLGDKVDTRNEARTFGMRVFCGTKMEWFFDPLA) are cytoplasmic.

The protein localises to the golgi apparatus membrane. The catalysed reaction is an alpha-D-mannosyl-(1&lt;-&gt;6)-1D-myo-inositol-1-phospho-N-[(R)-2-hydroxy-very-long-chain fatty acyl]-(R)-4-hydroxysphingoid base + a 1,2-diacyl-sn-glycero-3-phospho-(1D-myo-inositol) = an alpha-D-mannosyl-6-(1D-myo-inositol phospho)-(1&lt;-&gt;6)-1D-myo-inositol-1-phospho-N-[(R)-2-hydroxy-very-long-chain fatty acyl]-(R)-4-hydroxysphingoid base + a 1,2-diacyl-sn-glycerol. It catalyses the reaction a mannosylinositol-1-phospho-N-acyl-sphingoid base + a 1,2-diacyl-sn-glycero-3-phospho-(1D-myo-inositol) = an inositol phosphomannosylnositol-1-phospho-N-acylsphingoid base + a 1,2-diacyl-sn-glycerol. The enzyme catalyses a mannosylinositol-1-phospho-N-(2-hydroxyacyl)-4R-hydroxysphingoid base + a 1,2-diacyl-sn-glycero-3-phospho-(1D-myo-inositol) = an inositol phosphomannosylnositol-1-phospho-N-(2-hydroxyacyl)-4R-hydroxysphingoid base + a 1,2-diacyl-sn-glycerol. Catalyzes the addition of a phosphorylinositol group onto mannosyl phosphorylinositol ceramide (MIPC) to form mannosyl diphosphorylinositol ceramide (M(IP)2C), the major sphingolipid in membranes of S.cerevisiae. This chain is Inositolphosphotransferase 1, found in Saccharomyces cerevisiae (strain ATCC 204508 / S288c) (Baker's yeast).